Here is a 167-residue protein sequence, read N- to C-terminus: NAD(P)H-quinone oxidoreductase subunit I, chloroplastic (167 aa).

2 consecutive 4Fe-4S ferredoxin-type domains span residues 55–84 (GRIHFEFDKCIACEVCVRVCPIDLPVVDWK) and 95–124 (LNYSIDFGICIFCGNCVEYCPTNCLSMTEE). Cys64, Cys67, Cys70, Cys74, Cys104, Cys107, Cys110, and Cys114 together coordinate [4Fe-4S] cluster.

Belongs to the complex I 23 kDa subunit family. In terms of assembly, NDH is composed of at least 16 different subunits, 5 of which are encoded in the nucleus. [4Fe-4S] cluster is required as a cofactor.

It localises to the plastid. The protein localises to the chloroplast thylakoid membrane. The enzyme catalyses a plastoquinone + NADH + (n+1) H(+)(in) = a plastoquinol + NAD(+) + n H(+)(out). It carries out the reaction a plastoquinone + NADPH + (n+1) H(+)(in) = a plastoquinol + NADP(+) + n H(+)(out). Its function is as follows. NDH shuttles electrons from NAD(P)H:plastoquinone, via FMN and iron-sulfur (Fe-S) centers, to quinones in the photosynthetic chain and possibly in a chloroplast respiratory chain. The immediate electron acceptor for the enzyme in this species is believed to be plastoquinone. Couples the redox reaction to proton translocation, and thus conserves the redox energy in a proton gradient. This is NAD(P)H-quinone oxidoreductase subunit I, chloroplastic from Aethionema cordifolium (Lebanon stonecress).